A 900-amino-acid chain; its full sequence is Zinc finger protein 62 homolog (900 aa).

The tract at residues 1-97 is disordered; the sequence is MSHLKTSTED…EASEKSLHLS (97 aa). Lysine 5 is covalently cross-linked (Glycyl lysine isopeptide (Lys-Gly) (interchain with G-Cter in SUMO2)). Over residues 9–18 the composition is skewed to acidic residues; it reads EDEEPTEEYE. The segment covering 47-73 has biased composition (basic and acidic residues); the sequence is SKVENQQKKPVENRMKEDKSSIREAIS. Residues lysine 48, lysine 62, lysine 65, lysine 82, and lysine 92 each participate in a glycyl lysine isopeptide (Lys-Gly) (interchain with G-Cter in SUMO2) cross-link. The span at 83–94 shows a compositional bias: basic and acidic residues; the sequence is TEQEGEASEKSL. 13 C2H2-type zinc fingers span residues 225 to 247, 253 to 275, 281 to 303, 309 to 331, 337 to 359, 365 to 387, 393 to 415, 421 to 443, 449 to 471, 477 to 499, 505 to 527, 533 to 555, and 561 to 583; these read CKCD…KRIH, YECG…KRIH, YECD…KRIH, YECD…KSIH, YKCD…KVIH, YKCD…KSIH, HECK…RTIH, YVCD…RRLH, YKCD…KGIH, YKCS…KRIH, FGCD…KRIH, and YKCE…KSVH. Residue lysine 587 forms a Glycyl lysine isopeptide (Lys-Gly) (interchain with G-Cter in SUMO2) linkage. 10 C2H2-type zinc fingers span residues 589–611, 617–639, 645–667, 673–695, 701–723, 729–751, 757–779, 785–807, 813–834, and 840–862; these read FKCD…KKVH, YKCD…RRVH, YECD…KRIH, YECD…KSTH, HTCD…KRVH, FKCV…KRIH, YVCD…KRIH, YECD…KSVH, YNCE…KRIH, and YRCN…KRTH. Lysine 748 participates in a covalent cross-link: Glycyl lysine isopeptide (Lys-Gly) (interchain with G-Cter in SUMO2). Lysine 882 is covalently cross-linked (Glycyl lysine isopeptide (Lys-Gly) (interchain with G-Cter in SUMO2)).

The protein belongs to the krueppel C2H2-type zinc-finger protein family.

It is found in the nucleus. May play a role in differentiating skeletal muscle. This chain is Zinc finger protein 62 homolog (ZFP62), found in Homo sapiens (Human).